A 163-amino-acid chain; its full sequence is Disulfide bond formation protein B (163 aa).

The Cytoplasmic portion of the chain corresponds to 1 to 9 (MRLASPRSL). The helical transmembrane segment at 10–26 (FVIAFLGSALLIAIALY) threads the bilayer. Residues 27-44 (MEHVMGLAPCPLCIVQRI) lie on the Periplasmic side of the membrane. A disulfide bridge links cysteine 36 with cysteine 39. The chain crosses the membrane as a helical span at residues 45 to 61 (CVIGFGLVCLVAAIHGP). Residues 62 to 67 (AKVGRR) are Cytoplasmic-facing. The chain crosses the membrane as a helical span at residues 68-85 (VYAAIAALFVAAGAATAI). At 86 to 142 (RQIWLQSVPADQLPSCLPSLEYMMEALPFQEIARLVLHGTAECAEVSWTMLGMSIPE) the chain is on the periplasmic side. Cysteine 101 and cysteine 128 are oxidised to a cystine. The chain crosses the membrane as a helical span at residues 143–161 (WSLLGFIGMAIVCLWQLLR). The Cytoplasmic portion of the chain corresponds to 162 to 163 (RD).

This sequence belongs to the DsbB family.

It is found in the cell inner membrane. Required for disulfide bond formation in some periplasmic proteins. Acts by oxidizing the DsbA protein. The polypeptide is Disulfide bond formation protein B (Stutzerimonas stutzeri (strain A1501) (Pseudomonas stutzeri)).